Consider the following 119-residue polypeptide: MVQENKNFATAKAKSIRVSPRKLNLVAAFIRNMKVSEALVQLTFSPKKIAKVVKDCLQSAVANAENNLGLDIDRLVITKATVGKALVMKRVMPRAKGRATRINKFFSNLYITVTEKEDN.

It belongs to the universal ribosomal protein uL22 family. Part of the 50S ribosomal subunit.

This protein binds specifically to 23S rRNA; its binding is stimulated by other ribosomal proteins, e.g. L4, L17, and L20. It is important during the early stages of 50S assembly. It makes multiple contacts with different domains of the 23S rRNA in the assembled 50S subunit and ribosome. Functionally, the globular domain of the protein is located near the polypeptide exit tunnel on the outside of the subunit, while an extended beta-hairpin is found that lines the wall of the exit tunnel in the center of the 70S ribosome. This is Large ribosomal subunit protein uL22 from Rickettsia felis (strain ATCC VR-1525 / URRWXCal2) (Rickettsia azadi).